Here is a 155-residue protein sequence, read N- to C-terminus: Small ribosomal subunit protein uS7 (155 aa).

This sequence belongs to the universal ribosomal protein uS7 family. Part of the 30S ribosomal subunit. Contacts proteins S9 and S11.

Functionally, one of the primary rRNA binding proteins, it binds directly to 16S rRNA where it nucleates assembly of the head domain of the 30S subunit. Is located at the subunit interface close to the decoding center, probably blocks exit of the E-site tRNA. This chain is Small ribosomal subunit protein uS7, found in Mycoplasma capricolum subsp. capricolum (strain California kid / ATCC 27343 / NCTC 10154).